The primary structure comprises 352 residues: Sortase SrtE1 (352 aa).

Basic and acidic residues-rich tracts occupy residues 1 to 10 (MTALRPERDS) and 34 to 45 (RYEESAAGEENR). The tract at residues 1 to 132 (MTALRPERDS…RQARARKPGA (132 aa)) is disordered. Topologically, residues 1–139 (MTALRPERDS…PGAAVVASRA (139 aa)) are cytoplasmic. The required for protein stability stretch occupies residues 15–79 (DQGSSYGQPY…TGPIGGGPDG (65 aa)). Gly residues predominate over residues 71–82 (GPIGGGPDGGGR). Residues 83–97 (AARRKAAKRRHGRRG) are compositionally biased toward basic residues. Residues 140–160 (IGEIFITTGVLMLLFVTYQLW) traverse the membrane as a helical segment. At 161–352 (WTNVRAHAQA…SKGKPDALVS (192 aa)) the chain is on the extracellular side. Residues histidine 251 and cysteine 320 contribute to the active site. Arginine 329 functions as the Proton donor in the catalytic mechanism.

It belongs to the bacterial sortase family. Class E subfamily.

Its subcellular location is the cell membrane. The catalysed reaction is The enzyme catalyzes a cell wall sorting reaction in which a surface protein with a sorting signal containing a LPXTG motif is cleaved between the Thr and Gly residue. The resulting threonine carboxyl end of the protein is covalently attached to a pentaglycine cross-bridge of peptidoglycan.. Functionally, transpeptidase that anchors surface proteins to the cell wall. Recognizes both Leu-Ala-x-Thr-Gly and Leu-Pro-x-Thr-Gly, with a preference for the former. Unlike the S.aureus sortase it cleaves not only the Thr-Gly motif but also the Ala-X bond; Ala-Glu and Ala-His bonds are better substrates than the Thr-Gly motif in vitro. Among its possible substrates are the chaplins ChpA, ChpB and ChpC; this enzyme is less important for ChpC attachment than is SrtE2. A double knockout mutant of srtE1 and srtE2 shows a developmental defect in aerial hyphae formation more dramatic than that due to chaplin deletion. The chain is Sortase SrtE1 from Streptomyces coelicolor (strain ATCC BAA-471 / A3(2) / M145).